Reading from the N-terminus, the 297-residue chain is Cell division protein ZipA (297 aa).

Met1 is a topological domain (periplasmic). The chain crosses the membrane as a helical span at residues 2-22 (EIGLREWLILIGIIVIAGILF). Residues 23–297 (DGWRRMRGGK…FERRALTQKR (275 aa)) are Cytoplasmic-facing. A disordered region spans residues 48–151 (DEEGGSAEVL…AAPASNSVKE (104 aa)). Residues 83-92 (ARDREREPKP) are compositionally biased toward basic and acidic residues. The segment covering 124–133 (LFSDSDDDFA) has biased composition (acidic residues).

It belongs to the ZipA family. As to quaternary structure, interacts with FtsZ via their C-terminal domains.

Its subcellular location is the cell inner membrane. Essential cell division protein that stabilizes the FtsZ protofilaments by cross-linking them and that serves as a cytoplasmic membrane anchor for the Z ring. Also required for the recruitment to the septal ring of downstream cell division proteins. In Pseudomonas putida (strain ATCC 47054 / DSM 6125 / CFBP 8728 / NCIMB 11950 / KT2440), this protein is Cell division protein ZipA.